Consider the following 726-residue polypeptide: Dipeptidyl-peptidase 5 (726 aa).

The first 19 residues, 1-19, serve as a signal peptide directing secretion; that stretch reads MAAAKWLIASLAFASSGLA. N-linked (GlcNAc...) asparagine glycans are attached at residues asparagine 96 and asparagine 252. Residues 269–291 form a disordered region; the sequence is AEPINKRNGPRTPQGIEGASSSP. Serine 558 (charge relay system) is an active-site residue. An N-linked (GlcNAc...) asparagine glycan is attached at asparagine 605. Residues aspartate 641 and histidine 673 each act as charge relay system in the active site. Residue asparagine 699 is glycosylated (N-linked (GlcNAc...) asparagine).

The protein belongs to the peptidase S9C family.

The protein localises to the secreted. The protein is Dipeptidyl-peptidase 5 (DPPV) of Arthroderma benhamiae (Trichophyton mentagrophytes).